A 510-amino-acid chain; its full sequence is Anaerobic nitric oxide reductase transcription regulator NorR (510 aa).

A Sigma-54 factor interaction domain is found at 188–417 (IIGNSQGMRT…LEHVIKRAAV (230 aa)). ATP contacts are provided by residues 216-223 (GETGVGKE) and 279-288 (ADGGTLFLDE). A DNA-binding region (H-T-H motif) is located at residues 486-505 (WAATARQLELDSGNLHRLAK).

It participates in nitrogen metabolism; nitric oxide reduction. Functionally, required for the expression of anaerobic nitric oxide (NO) reductase, acts as a transcriptional activator for at least the norVW operon. Activation also requires sigma-54. The sequence is that of Anaerobic nitric oxide reductase transcription regulator NorR from Vibrio vulnificus (strain YJ016).